The chain runs to 29 residues: NADP phosphatase 1 (29 aa).

Homodimer.

The protein resides in the cytoplasm. The chain is NADP phosphatase 1 from Arthrobacter sp. (strain KM).